We begin with the raw amino-acid sequence, 231 residues long: Large ribosomal subunit protein uL1 (231 aa).

It belongs to the universal ribosomal protein uL1 family. As to quaternary structure, part of the 50S ribosomal subunit.

Functionally, binds directly to 23S rRNA. The L1 stalk is quite mobile in the ribosome, and is involved in E site tRNA release. Protein L1 is also a translational repressor protein, it controls the translation of the L11 operon by binding to its mRNA. The chain is Large ribosomal subunit protein uL1 from Paracidovorax citrulli (strain AAC00-1) (Acidovorax citrulli).